The following is a 660-amino-acid chain: Methionine--tRNA ligase (660 aa).

Positions 11–21 (PYANGPCHLGH) match the 'HIGH' region motif. Zn(2+) contacts are provided by cysteine 143, cysteine 146, cysteine 155, and cysteine 158. Positions 325–329 (KMSTS) match the 'KMSKS' region motif. ATP is bound at residue threonine 328. The 98-residue stretch at 563–660 (DFDKVVIKIG…DECEVGERIQ (98 aa)) folds into the tRNA-binding domain.

The protein belongs to the class-I aminoacyl-tRNA synthetase family. MetG type 1 subfamily. In terms of assembly, homodimer. The cofactor is Zn(2+).

The protein localises to the cytoplasm. It catalyses the reaction tRNA(Met) + L-methionine + ATP = L-methionyl-tRNA(Met) + AMP + diphosphate. Functionally, is required not only for elongation of protein synthesis but also for the initiation of all mRNA translation through initiator tRNA(fMet) aminoacylation. This Methanobrevibacter smithii (strain ATCC 35061 / DSM 861 / OCM 144 / PS) protein is Methionine--tRNA ligase.